Reading from the N-terminus, the 593-residue chain is UvrABC system protein C (593 aa).

The GIY-YIG domain maps to 14-91 (DSPGCYLHKD…IQENMPKYNI (78 aa)). Positions 196 to 231 (NKIVNGLTEKMKSAAMTMEFERAAEYRDLIEAISLL) constitute a UVR domain.

Belongs to the UvrC family. As to quaternary structure, interacts with UvrB in an incision complex.

The protein localises to the cytoplasm. In terms of biological role, the UvrABC repair system catalyzes the recognition and processing of DNA lesions. UvrC both incises the 5' and 3' sides of the lesion. The N-terminal half is responsible for the 3' incision and the C-terminal half is responsible for the 5' incision. The sequence is that of UvrABC system protein C from Streptococcus agalactiae serotype V (strain ATCC BAA-611 / 2603 V/R).